The chain runs to 293 residues: Elongation factor Ts (293 aa).

The tract at residues 80–83 (TDFV) is involved in Mg(2+) ion dislocation from EF-Tu.

This sequence belongs to the EF-Ts family.

It is found in the cytoplasm. In terms of biological role, associates with the EF-Tu.GDP complex and induces the exchange of GDP to GTP. It remains bound to the aminoacyl-tRNA.EF-Tu.GTP complex up to the GTP hydrolysis stage on the ribosome. This chain is Elongation factor Ts, found in Burkholderia multivorans (strain ATCC 17616 / 249).